The primary structure comprises 221 residues: Probable septum site-determining protein MinC (221 aa).

This sequence belongs to the MinC family. As to quaternary structure, interacts with MinD and FtsZ.

Cell division inhibitor that blocks the formation of polar Z ring septums. Rapidly oscillates between the poles of the cell to destabilize FtsZ filaments that have formed before they mature into polar Z rings. Prevents FtsZ polymerization. This is Probable septum site-determining protein MinC from Shewanella denitrificans (strain OS217 / ATCC BAA-1090 / DSM 15013).